Consider the following 89-residue polypeptide: MSRSLKKGPYINVKLEKKVLAMNESGKKVVVKTWARASMISPDFVGHTVAVHNGNKFIPVYVTENMVGHKLGEFAPTRTFRGHAGNKKK.

It belongs to the universal ribosomal protein uS19 family.

Its function is as follows. Protein S19 forms a complex with S13 that binds strongly to the 16S ribosomal RNA. This Phocaeicola vulgatus (strain ATCC 8482 / DSM 1447 / JCM 5826 / CCUG 4940 / NBRC 14291 / NCTC 11154) (Bacteroides vulgatus) protein is Small ribosomal subunit protein uS19.